We begin with the raw amino-acid sequence, 308 residues long: Ribosomal RNA large subunit methyltransferase F (308 aa).

This sequence belongs to the methyltransferase superfamily. METTL16/RlmF family.

It localises to the cytoplasm. The enzyme catalyses adenosine(1618) in 23S rRNA + S-adenosyl-L-methionine = N(6)-methyladenosine(1618) in 23S rRNA + S-adenosyl-L-homocysteine + H(+). Specifically methylates the adenine in position 1618 of 23S rRNA. This chain is Ribosomal RNA large subunit methyltransferase F, found in Escherichia coli (strain SMS-3-5 / SECEC).